The chain runs to 160 residues: 2-C-methyl-D-erythritol 2,4-cyclodiphosphate synthase (160 aa).

A divalent metal cation is bound by residues aspartate 11 and histidine 13. Residues 11–13 (DVH) and 37–38 (HS) contribute to the 4-CDP-2-C-methyl-D-erythritol 2-phosphate site. Position 45 (histidine 45) interacts with a divalent metal cation. Residues 59 to 61 (DIG) and arginine 145 each bind 4-CDP-2-C-methyl-D-erythritol 2-phosphate.

This sequence belongs to the IspF family. Homotrimer. It depends on a divalent metal cation as a cofactor.

The enzyme catalyses 4-CDP-2-C-methyl-D-erythritol 2-phosphate = 2-C-methyl-D-erythritol 2,4-cyclic diphosphate + CMP. It participates in isoprenoid biosynthesis; isopentenyl diphosphate biosynthesis via DXP pathway; isopentenyl diphosphate from 1-deoxy-D-xylulose 5-phosphate: step 4/6. Involved in the biosynthesis of isopentenyl diphosphate (IPP) and dimethylallyl diphosphate (DMAPP), two major building blocks of isoprenoid compounds. Catalyzes the conversion of 4-diphosphocytidyl-2-C-methyl-D-erythritol 2-phosphate (CDP-ME2P) to 2-C-methyl-D-erythritol 2,4-cyclodiphosphate (ME-CPP) with a corresponding release of cytidine 5-monophosphate (CMP). The chain is 2-C-methyl-D-erythritol 2,4-cyclodiphosphate synthase from Neisseria gonorrhoeae (strain ATCC 700825 / FA 1090).